We begin with the raw amino-acid sequence, 175 residues long: Myosin regulatory light chain 2, atrial isoform (175 aa).

Alanine 2 carries the N-acetylalanine modification. 2 positions are modified to phosphoserine: serine 22 and serine 23. EF-hand domains are found at residues 32–67 (AQIQ…LGKV), 102–137 (DPEE…QADK), and 138–173 (FSPA…GDEK). Aspartate 45, asparagine 47, aspartate 49, and aspartate 56 together coordinate Ca(2+).

As to quaternary structure, myosin is a hexamer of 2 heavy chains and 4 light chains.

This chain is Myosin regulatory light chain 2, atrial isoform (MYL7), found in Sus scrofa (Pig).